The chain runs to 1130 residues: Transmembrane channel-like protein 3 (1130 aa).

The Cytoplasmic segment spans residues 1–148 (MKTSKASQRY…ASYFIFLRWL (148 aa)). The chain crosses the membrane as a helical span at residues 149–169 (FGINIVLTVMTGAFVVLPELI). The Extracellular segment spans residues 170–192 (AGQPFGSTASKTIPREQITSAQD). Residues 193-213 (LDTVWSLGGYLQYSVLFYGYY) form a helical membrane-spanning segment. Topologically, residues 214-225 (GRERRIGRAGYR) are cytoplasmic. A helical transmembrane segment spans residues 226–246 (LPLAYFLVGMAVFAYSFIVLL). The Extracellular portion of the chain corresponds to 247–319 (KRMAKNSRTS…KNMAVTVCLR (73 aa)). A glycan (N-linked (GlcNAc...) asparagine) is linked at Asn264. Residues 320–340 (IIANILVLLSLAGSIYLIYFV) traverse the membrane as a helical segment. Residues 341–361 (VDRSQKLEQSKKELTLWEKNE) lie on the Cytoplasmic side of the membrane. Residues 362 to 382 (VSVVVSLVTMLAPSAFDLIAA) traverse the membrane as a helical segment. The Extracellular portion of the chain corresponds to 383–393 (LEMYHPRTTLR). Residues 394–414 (FQLARVLVLYLGNLYSLIIAL) form a helical membrane-spanning segment. Over 415 to 509 (LDKVNSMNIE…CWETYVGQEM (95 aa)) the chain is Cytoplasmic. The chain crosses the membrane as a helical span at residues 510 to 530 (LKLSVIDMLFTVASILLIDFF). Residues 531 to 570 (RGLFVRYLSDYWCWDLESKFPEYGEFKIAENVLHLVYNQG) lie on the Extracellular side of the membrane. The helical transmembrane segment at 571–591 (MIWMGAFFSPCLPAFNVLKLI) threads the bilayer. Topologically, residues 592 to 619 (GLMYLRSWAVLTCNVPHQQVFRASRSNN) are cytoplasmic. The chain crosses the membrane as a helical span at residues 620 to 640 (FYLAMLLFMLFLCMLPTIFAI). At 641-680 (VHYKPSLNCGPFSGQEKIYDIVSETIENDFPTWFHAVVGH) the chain is on the extracellular side. Residues 681-701 (ISSPVVILPAVLLLFMLIYYL) form a helical membrane-spanning segment. At 702 to 1130 (QSIARSLKLS…DLNDLICSNV (429 aa)) the chain is on the cytoplasmic side. Disordered stretches follow at residues 742-774 (DARQ…EESS), 819-893 (RSLP…FQPI), 999-1019 (SSCF…KYQR), 1033-1059 (QLER…LKAR), and 1097-1116 (QGRF…KSRQ). Residues 747–767 (GSATEAESSENSKPKTLQARI) show a composition bias toward polar residues. Basic and acidic residues predominate over residues 840–850 (SRSRPEQDTNR). Polar residues predominate over residues 856–876 (CSSTSNLHKNRSCSSVTQTQP). Basic and acidic residues-rich tracts occupy residues 878–890 (KDVR…RKDF) and 1006–1017 (DRSENNTRDPKY). The span at 1097-1106 (QGRFPRSASQ) shows a compositional bias: polar residues.

It belongs to the TMC family. Detected in most neuronal organs and also in some non-neuronal tissues.

The protein localises to the membrane. Probable component of an ion channel. Molecular function hasn't been characterized yet. The chain is Transmembrane channel-like protein 3 from Mus musculus (Mouse).